A 797-amino-acid polypeptide reads, in one-letter code: Mitochondrial inner membrane m-AAA protease component AFG3L2 (797 aa).

Residues 1–38 (MAHRCLRLWGRGGCWPRGLQQLLVPGGVGPGEQPCLRT) constitute a mitochondrion transit peptide. The propeptide at 39-66 (LYRFVTTQARASRNSLLTDIIAAYQRFC) is removed in mature form. Over 39 to 142 (LYRFVTTQAR…KGDIPWDDKD (104 aa)) the chain is Mitochondrial matrix. The segment at 76–126 (YFPNGKNGKKASEPKEVMGEKKESKPAATTRSSGGGGGGGGKRGGKKDDSH) is disordered. The segment covering 85–100 (KASEPKEVMGEKKESK) has biased composition (basic and acidic residues). The span at 108-117 (SGGGGGGGGK) shows a compositional bias: gly residues. The residue at position 117 (Lys117) is an N6-succinyllysine. The chain crosses the membrane as a helical span at residues 143 to 163 (FRMFFLWTALFWGGVMFYLLL). Over 164-250 (KRSGREITWK…VPVVYIAESD (87 aa)) the chain is Mitochondrial intermembrane. The chain crosses the membrane as a helical span at residues 251–271 (GSFLLSMLPTVLIIAFLLYTI). Residues 272–797 (RRGPAGIGRT…EEPPGEKVAN (526 aa)) are Mitochondrial matrix-facing. ATP-binding residues include Val310, Ala311, Thr352, Gly353, Lys354, Thr355, Leu356, and His490. Residue His574 participates in Zn(2+) binding. Glu575 is a catalytic residue. 2 residues coordinate Zn(2+): His578 and Asp649. The segment at 759 to 797 (FVEGTGSLDEDTSLPEGLKDWNKEREKEKEEPPGEKVAN) is disordered. Residues 775-797 (GLKDWNKEREKEKEEPPGEKVAN) show a composition bias toward basic and acidic residues.

It in the N-terminal section; belongs to the AAA ATPase family. This sequence in the C-terminal section; belongs to the peptidase M41 family. As to quaternary structure, homohexamer. Forms heterohexamers with SPG7. The m-AAA protease is either composed of homohexamers of AFG3L2 or heterohexamers of AFG3L2 and SPG7. Interacts with MAIP1. Interacts with DNAJC19. Interacts with PHB2. It depends on Zn(2+) as a cofactor. Post-translationally, upon import into the mitochondrion, the N-terminal transit peptide is cleaved to generate an intermediate form which undergoes autocatalytic proteolytic processing to generate the proteolytically active mature form. Ubiquitous. Highly expressed in the cerebellar Purkinje cells.

The protein resides in the mitochondrion inner membrane. It catalyses the reaction ATP + H2O = ADP + phosphate + H(+). Functionally, catalytic component of the m-AAA protease, a protease that plays a key role in proteostasis of inner mitochondrial membrane proteins, and which is essential for axonal and neuron development. AFG3L2 possesses both ATPase and protease activities: the ATPase activity is required to unfold substrates, threading them into the internal proteolytic cavity for hydrolysis into small peptide fragments. The m-AAA protease carries out quality control in the inner membrane of the mitochondria by mediating degradation of mistranslated or misfolded polypeptides. The m-AAA protease complex also promotes the processing and maturation of mitochondrial proteins, such as MRPL32/bL32m, PINK1 and SP7. Mediates protein maturation of the mitochondrial ribosomal subunit MRPL32/bL32m by catalyzing the cleavage of the presequence of MRPL32/bL32m prior to assembly into the mitochondrial ribosome. Required for SPG7 maturation into its active mature form after SPG7 cleavage by mitochondrial-processing peptidase (MPP). Required for the maturation of PINK1 into its 52kDa mature form after its cleavage by mitochondrial-processing peptidase (MPP). Acts as a regulator of calcium in neurons by mediating degradation of SMDT1/EMRE before its assembly with the uniporter complex, limiting the availability of SMDT1/EMRE for MCU assembly and promoting efficient assembly of gatekeeper subunits with MCU. Promotes the proteolytic degradation of GHITM upon hyperpolarization of mitochondria: progressive GHITM degradation leads to respiratory complex I degradation and broad reshaping of the mitochondrial proteome by AFG3L2. Also acts as a regulator of mitochondrial glutathione homeostasis by mediating cleavage and degradation of SLC25A39. SLC25A39 cleavage is prevented when SLC25A39 binds iron-sulfur. Involved in the regulation of OMA1-dependent processing of OPA1. May act by mediating processing of OMA1 precursor, participating in OMA1 maturation. The protein is Mitochondrial inner membrane m-AAA protease component AFG3L2 of Homo sapiens (Human).